The primary structure comprises 388 residues: Probable mannan endo-1,4-beta-mannosidase A-1 (388 aa).

The first 20 residues, Met-1–Ala-20, serve as a signal peptide directing secretion. Positions 93 and 206 each coordinate substrate. Glu-207 acts as the Proton donor in catalysis. A glycan (N-linked (GlcNAc...) asparagine) is linked at Asn-264. Tyr-282 serves as a coordination point for substrate. The Nucleophile role is filled by Glu-315. Residue Asn-335 is glycosylated (N-linked (GlcNAc...) asparagine). Residue Trp-345 participates in substrate binding.

The protein belongs to the glycosyl hydrolase 5 (cellulase A) family.

The protein localises to the secreted. It carries out the reaction Random hydrolysis of (1-&gt;4)-beta-D-mannosidic linkages in mannans, galactomannans and glucomannans.. Its function is as follows. Endo-1,4-mannanase, a crucial enzyme for depolymerization of seed galactomannans and wood galactoglucomannans. The polypeptide is Probable mannan endo-1,4-beta-mannosidase A-1 (manA-1) (Aspergillus terreus (strain NIH 2624 / FGSC A1156)).